Here is a 266-residue protein sequence, read N- to C-terminus: Ribosomal RNA small subunit methyltransferase A (266 aa).

S-adenosyl-L-methionine is bound by residues asparagine 11, leucine 13, glycine 37, glutamate 57, aspartate 85, and asparagine 104.

The protein belongs to the class I-like SAM-binding methyltransferase superfamily. rRNA adenine N(6)-methyltransferase family. RsmA subfamily.

The protein resides in the cytoplasm. It catalyses the reaction adenosine(1518)/adenosine(1519) in 16S rRNA + 4 S-adenosyl-L-methionine = N(6)-dimethyladenosine(1518)/N(6)-dimethyladenosine(1519) in 16S rRNA + 4 S-adenosyl-L-homocysteine + 4 H(+). Specifically dimethylates two adjacent adenosines (A1518 and A1519) in the loop of a conserved hairpin near the 3'-end of 16S rRNA in the 30S particle. May play a critical role in biogenesis of 30S subunits. This Campylobacter jejuni subsp. jejuni serotype O:2 (strain ATCC 700819 / NCTC 11168) protein is Ribosomal RNA small subunit methyltransferase A.